Consider the following 492-residue polypeptide: 5-taurinomethyluridine-[tRNA] synthase subunit GTPB3, mitochondrial (492 aa).

The N-terminal 20 residues, 1 to 20 (MWRGLSALVTRPASAPLRLC), are a transit peptide targeting the mitochondrion. Residues R52, E112, and K152 each contribute to the 5,10-methylenetetrahydrofolate site. Positions 249–416 (GANVVVAGPP…LLQALKTELA (168 aa)) constitute a TrmE-type G domain. GTP-binding positions include 256-263 (GPPNAGKS), 282-286 (GTTRD), 303-306 (DTAG), and 374-377 (NKSD). Residue N259 participates in K(+) binding. Mg(2+) is bound by residues S263 and T284. K492 provides a ligand contact to 5,10-methylenetetrahydrofolate.

This sequence belongs to the TRAFAC class TrmE-Era-EngA-EngB-Septin-like GTPase superfamily. TrmE GTPase family. In terms of assembly, homodimer; forms a dimer in the presence of potassium. Interacts with MTO1; forms the GTPBP3-MTO1 complex composed of homodimers of GTPBP3 and MTO1. It depends on K(+) as a cofactor.

It is found in the mitochondrion. The enzyme catalyses GTP + H2O = GDP + phosphate + H(+). In terms of biological role, GTPase component of the GTPBP3-MTO1 complex that catalyzes the 5-taurinomethyluridine (taum(5)U) modification at the 34th wobble position (U34) of mitochondrial tRNAs (mt-tRNAs), which plays a role in mt-tRNA decoding and mitochondrial translation. Taum(5)U formation on mammalian mt-tRNA requires the presence of both GTPBP3-mediated GTPase activity and MTO1 catalytic activity. This chain is 5-taurinomethyluridine-[tRNA] synthase subunit GTPB3, mitochondrial, found in Rattus norvegicus (Rat).